We begin with the raw amino-acid sequence, 526 residues long: Trigger factor (526 aa).

The 82-residue stretch at 162–243 (GDFVSIDLSA…LGSVKERELP (82 aa)) folds into the PPIase FKBP-type domain. Positions 425-460 (DTDGADVDPKEYFGDVEAEGDKADKAETDKAEEKPK) are enriched in basic and acidic residues. The tract at residues 425-526 (DTDGADVDPK…AKKAAEKKED (102 aa)) is disordered. Positions 461-517 (KAPAKKSTTKKSTAKKSTAKKSTAKKSTAKKSTAKKSTTKKATKSTAKKSTAKKTTA) are enriched in basic residues.

The protein belongs to the FKBP-type PPIase family. Tig subfamily.

It localises to the cytoplasm. It catalyses the reaction [protein]-peptidylproline (omega=180) = [protein]-peptidylproline (omega=0). Functionally, involved in protein export. Acts as a chaperone by maintaining the newly synthesized protein in an open conformation. Functions as a peptidyl-prolyl cis-trans isomerase. The polypeptide is Trigger factor (Corynebacterium jeikeium (strain K411)).